Reading from the N-terminus, the 112-residue chain is Protein BEX3 (112 aa).

Positions 1–45 (MANIHQENEEMEQPVQNGEEDRPLGGGEGHQPERNHRRGQARRLA) are disordered. The interaction with p75NTR/NGFR stretch occupies residues 69–94 (EIFMEEMREIRRKLRELQLRNCLRIL). The tract at residues 69–112 (EIFMEEMREIRRKLRELQLRNCLRILMGELSNHHDHHDEFCLMP) is interaction with 14-3-3 epsilon. Residues 78-88 (IRRKLRELQLR) carry the Nuclear export signal motif. The interval 101–105 (HHDHH) is his cluster. Cys-109 serves as a coordination point for Zn(2+).

The protein belongs to the BEX family. In terms of assembly, self-associates. Binds to the DEATH domain of p75NTR/NGFR. Interacts with 14-3-3 epsilon (YWHAE). Interacts with DIABLO/SMAC. In terms of processing, ubiquitinated. Degraded by the proteasome.

Its subcellular location is the nucleus. It localises to the cytoplasm. It is found in the cytosol. In terms of biological role, may be a signaling adapter molecule involved in NGFR/p75NTR-mediated apoptosis induced by NGF. Plays a role in zinc-triggered neuronal death. In absence of reductive stress, acts as a pseudosubstrate for the CRL2(FEM1B) complex: associates with FEM1B via zinc, thereby preventing association between FEM1B and its substrates. The chain is Protein BEX3 from Bos taurus (Bovine).